The following is a 66-amino-acid chain: Large ribosomal subunit protein bL35 (66 aa).

The protein belongs to the bacterial ribosomal protein bL35 family.

The polypeptide is Large ribosomal subunit protein bL35 (Leptospira biflexa serovar Patoc (strain Patoc 1 / Ames)).